We begin with the raw amino-acid sequence, 413 residues long: Serine hydroxymethyltransferase (413 aa).

Residues Leu-117 and 121 to 123 (GHL) each bind (6S)-5,6,7,8-tetrahydrofolate. Position 226 is an N6-(pyridoxal phosphate)lysine (Lys-226). (6S)-5,6,7,8-tetrahydrofolate-binding positions include Glu-239 and 349–351 (SPF).

The protein belongs to the SHMT family. As to quaternary structure, homodimer. Pyridoxal 5'-phosphate serves as cofactor.

The protein localises to the cytoplasm. It catalyses the reaction (6R)-5,10-methylene-5,6,7,8-tetrahydrofolate + glycine + H2O = (6S)-5,6,7,8-tetrahydrofolate + L-serine. Its pathway is one-carbon metabolism; tetrahydrofolate interconversion. It functions in the pathway amino-acid biosynthesis; glycine biosynthesis; glycine from L-serine: step 1/1. Functionally, catalyzes the reversible interconversion of serine and glycine with tetrahydrofolate (THF) serving as the one-carbon carrier. This reaction serves as the major source of one-carbon groups required for the biosynthesis of purines, thymidylate, methionine, and other important biomolecules. Also exhibits THF-independent aldolase activity toward beta-hydroxyamino acids, producing glycine and aldehydes, via a retro-aldol mechanism. The protein is Serine hydroxymethyltransferase of Bacillus cereus (strain AH820).